The following is a 226-amino-acid chain: Transcriptional regulatory protein DpiA (226 aa).

A Response regulatory domain is found at 6–122 (TLLIVEDETP…RLGQTLTRFR (117 aa)). 4-aspartylphosphate is present on Asp57. Residues 180 to 199 (AETVAQALTISRTTARRYLE) constitute a DNA-binding region (H-T-H motif).

Post-translationally, phosphorylated and activated by DpiB.

It localises to the cytoplasm. Its function is as follows. Member of the two-component regulatory system DpiA/DpiB, which is essential for expression of citrate-specific fermentation genes and genes involved in plasmid inheritance. Could be involved in response to both the presence of citrate and external redox conditions. The sequence is that of Transcriptional regulatory protein DpiA (dpiA) from Escherichia coli O157:H7.